The following is a 285-amino-acid chain: Bifunctional protein FolD (285 aa).

NADP(+)-binding positions include 165–167 (GRS) and Ser190.

Belongs to the tetrahydrofolate dehydrogenase/cyclohydrolase family. As to quaternary structure, homodimer.

It catalyses the reaction (6R)-5,10-methylene-5,6,7,8-tetrahydrofolate + NADP(+) = (6R)-5,10-methenyltetrahydrofolate + NADPH. The catalysed reaction is (6R)-5,10-methenyltetrahydrofolate + H2O = (6R)-10-formyltetrahydrofolate + H(+). It participates in one-carbon metabolism; tetrahydrofolate interconversion. Its function is as follows. Catalyzes the oxidation of 5,10-methylenetetrahydrofolate to 5,10-methenyltetrahydrofolate and then the hydrolysis of 5,10-methenyltetrahydrofolate to 10-formyltetrahydrofolate. This is Bifunctional protein FolD from Streptococcus pneumoniae (strain ATCC BAA-255 / R6).